Here is a 427-residue protein sequence, read N- to C-terminus: Ectonucleoside triphosphate diphosphohydrolase 5 (427 aa).

The signal sequence occupies residues Met1–Glu24. Glu171 acts as the Proton acceptor in catalysis. Residue Asn231 is glycosylated (N-linked (GlcNAc...) asparagine). 2 disulfide bridges follow: Cys271–Cys302 and Cys362–Cys376.

This sequence belongs to the GDA1/CD39 NTPase family. Monomer; active form. Homodimer; disulfide-linked. Homodimers are enzymatically inactive. Requires Ca(2+) as cofactor. The cofactor is Mg(2+). N-glycosylated; high-mannose type. In terms of tissue distribution, ubiquitous.

The protein localises to the endoplasmic reticulum. The protein resides in the secreted. It catalyses the reaction a ribonucleoside 5'-diphosphate + H2O = a ribonucleoside 5'-phosphate + phosphate + H(+). The enzyme catalyses GDP + H2O = GMP + phosphate + H(+). The catalysed reaction is UDP + H2O = UMP + phosphate + H(+). It carries out the reaction IDP + H2O = IMP + phosphate + H(+). It catalyses the reaction CDP + H2O = CMP + phosphate + H(+). The enzyme catalyses ADP + H2O = AMP + phosphate + H(+). It participates in protein modification; protein glycosylation. Its function is as follows. Hydrolyzes nucleoside diphosphates with a preference for GDP, IDP and UDP compared to ADP and CDP. In the lumen of the endoplasmic reticulum, hydrolyzes UDP that acts as an end-product feedback inhibitor of the UDP-Glc:glycoprotein glucosyltransferases. UMP can be transported back by an UDP-sugar antiporter to the cytosol where it is consumed to regenerate UDP-glucose. Therefore, it positively regulates protein reglucosylation by clearing UDP from the ER lumen and by promoting the regeneration of UDP-glucose. Protein reglucosylation is essential to proper glycoprotein folding and quality control in the ER. The chain is Ectonucleoside triphosphate diphosphohydrolase 5 (Entpd5) from Mus musculus (Mouse).